A 327-amino-acid chain; its full sequence is Spermidine/putrescine import ATP-binding protein PotA (327 aa).

Residues 5–235 enclose the ABC transporter domain; the sequence is IKVEAVEKHF…PKTLFVATFI (231 aa). Residue 37–44 coordinates ATP; that stretch reads GPSGCGKT.

It belongs to the ABC transporter superfamily. Spermidine/putrescine importer (TC 3.A.1.11.1) family. The complex is composed of two ATP-binding proteins (PotA), two transmembrane proteins (PotB and PotC) and a solute-binding protein (PotD).

It is found in the cell membrane. The catalysed reaction is ATP + H2O + polyamine-[polyamine-binding protein]Side 1 = ADP + phosphate + polyamineSide 2 + [polyamine-binding protein]Side 1.. In terms of biological role, part of the ABC transporter complex PotABCD involved in spermidine/putrescine import. Responsible for energy coupling to the transport system. The sequence is that of Spermidine/putrescine import ATP-binding protein PotA from Bacillus thuringiensis (strain Al Hakam).